The primary structure comprises 311 residues: Aspartate carbamoyltransferase catalytic subunit (311 aa).

Carbamoyl phosphate is bound by residues Arg-55 and Thr-56. Residue Lys-85 participates in L-aspartate binding. Arg-106, His-135, and Gln-138 together coordinate carbamoyl phosphate. L-aspartate contacts are provided by Arg-168 and Arg-230. Carbamoyl phosphate contacts are provided by Leu-268 and Pro-269.

Belongs to the aspartate/ornithine carbamoyltransferase superfamily. ATCase family. As to quaternary structure, heterododecamer (2C3:3R2) of six catalytic PyrB chains organized as two trimers (C3), and six regulatory PyrI chains organized as three dimers (R2).

It catalyses the reaction carbamoyl phosphate + L-aspartate = N-carbamoyl-L-aspartate + phosphate + H(+). Its pathway is pyrimidine metabolism; UMP biosynthesis via de novo pathway; (S)-dihydroorotate from bicarbonate: step 2/3. Functionally, catalyzes the condensation of carbamoyl phosphate and aspartate to form carbamoyl aspartate and inorganic phosphate, the committed step in the de novo pyrimidine nucleotide biosynthesis pathway. The sequence is that of Aspartate carbamoyltransferase catalytic subunit from Citrobacter koseri (strain ATCC BAA-895 / CDC 4225-83 / SGSC4696).